The chain runs to 756 residues: Alpha-1,2-mannosyltransferase MNN26 (756 aa).

The Cytoplasmic segment spans residues 1–10 (MSLRRLSPSH). A helical membrane pass occupies residues 11 to 31 (LILGTLVLGVIIFNLYVLTST). Residues 32-756 (HEDIKKVKGP…NGKNKQGAAS (725 aa)) are Extracellular-facing. The span at 723 to 734 (LGEKSQPKQPEI) shows a compositional bias: polar residues. The segment at 723-756 (LGEKSQPKQPEINNNNNNNNNDDDNGKNKQGAAS) is disordered.

Belongs to the MNN1/MNT family.

The protein localises to the golgi apparatus membrane. It participates in protein modification; protein glycosylation. Functionally, alpha-1,2-mannosyltransferase required for cell wall integrity. Responsible for addition of the first alpha-1,2-linked mannose to form the branches on the mannan backbone of oligosaccharides. Addition of alpha-1,2-mannose is required for stabilization of the alpha-1,6-mannose backbone and hence regulates mannan fibril length; and is important for both immune recognition and virulence. In Candida albicans (strain SC5314 / ATCC MYA-2876) (Yeast), this protein is Alpha-1,2-mannosyltransferase MNN26 (MNN26).